We begin with the raw amino-acid sequence, 444 residues long: MEPKERELAFGTDGVRGVANRGLLPEDALRLGLAAARRFGGTVVIGRDTRLSGGMLSSALAAGVASGGARALDLGVLPTPGAAALAARLGASAAGVVSASHNPYPDNGIKFLSGEGRKLPQRTERELERLARDPFPERPVAGGVGRVEALEDAPEMYAGAVLGALRPEVPGLRVLLDCANGAACAVAPRIFRELGVQLTVVGDAPDGTNINEGCGSTHIERLEVAGHDVAFAFDGDADRVLALDERGRVVDGDRIIAILARDLKERGRLGGGAVVTVMSNLGLLKALESLGIPCEVTPVGDRHVAEAMLRVGASVGGEQSGHIIVAEHATTGDGIVTALALLDVMARTGRSLSELAGVMEVYPQVLVNVRVERDGGAGRVAASGTVERAVEDARRELGERGRIVLRPSGTEPVVRVMVEHEDEEVCRRVCERVAGVVSREGGGG.

The active-site Phosphoserine intermediate is the Ser100. Mg(2+) is bound by residues Ser100, Asp234, Asp236, and Asp238. A Phosphoserine modification is found at Ser100.

The protein belongs to the phosphohexose mutase family. It depends on Mg(2+) as a cofactor. Activated by phosphorylation.

The catalysed reaction is alpha-D-glucosamine 1-phosphate = D-glucosamine 6-phosphate. Functionally, catalyzes the conversion of glucosamine-6-phosphate to glucosamine-1-phosphate. In Rubrobacter xylanophilus (strain DSM 9941 / JCM 11954 / NBRC 16129 / PRD-1), this protein is Phosphoglucosamine mutase.